The chain runs to 345 residues: D-alanine--D-alanine ligase (345 aa).

Positions 133-332 constitute an ATP-grasp domain; that stretch reads KWLCHARGVK…LPHTKRAKVT (200 aa). Residue 160 to 211 coordinates ATP; sequence AYPIIVKPSRLGSSIGVSIVKDESKLDYALDSAFEFDNTVIVEPFLEGVKEY. D284, E296, and N298 together coordinate Mg(2+).

This sequence belongs to the D-alanine--D-alanine ligase family. Mg(2+) serves as cofactor. It depends on Mn(2+) as a cofactor.

It localises to the cytoplasm. It carries out the reaction 2 D-alanine + ATP = D-alanyl-D-alanine + ADP + phosphate + H(+). It functions in the pathway cell wall biogenesis; peptidoglycan biosynthesis. Functionally, cell wall formation. The polypeptide is D-alanine--D-alanine ligase (Sulfurimonas denitrificans (strain ATCC 33889 / DSM 1251) (Thiomicrospira denitrificans (strain ATCC 33889 / DSM 1251))).